A 333-amino-acid chain; its full sequence is Eukaryotic translation initiation factor 3 subunit H-B (333 aa).

The MPN domain maps to 20–154; it reads IQIEGLVVMK…LKAYRLTPKL (135 aa). The interval 249–295 is disordered; that stretch reads SKQQQQKHQYVQRRQQENAQRQSRGEPPLPEEDLTKMFKPPQPPPRM. Low complexity predominate over residues 250–261; the sequence is KQQQQKHQYVQR.

Belongs to the eIF-3 subunit H family. As to quaternary structure, component of the eukaryotic translation initiation factor 3 (eIF-3) complex, which is composed of 13 subunits: eif3a, eif3b, eif3c, eif3d, eif3e, eif3f, eif3g, eif3h, eif3i, eif3j, eif3k, eif3l and eif3m.

The protein localises to the cytoplasm. Functionally, component of the eukaryotic translation initiation factor 3 (eIF-3) complex, which is involved in protein synthesis of a specialized repertoire of mRNAs and, together with other initiation factors, stimulates binding of mRNA and methionyl-tRNAi to the 40S ribosome. The eIF-3 complex specifically targets and initiates translation of a subset of mRNAs involved in cell proliferation. The protein is Eukaryotic translation initiation factor 3 subunit H-B (eif3hb) of Danio rerio (Zebrafish).